The following is a 433-amino-acid chain: 26S proteasome regulatory subunit 7 (433 aa).

The tract at residues 1–22 (MPDYLGADQRKTKEDEKDDKPI) is disordered. Basic and acidic residues predominate over residues 8–22 (DQRKTKEDEKDDKPI). Lys-116 is subject to N6-acetyllysine. 216–223 (GPPGTGKT) is an ATP binding site. At Lys-422 the chain carries N6-acetyllysine.

The protein belongs to the AAA ATPase family. As to quaternary structure, component of the 19S proteasome regulatory particle complex. The 26S proteasome consists of a 20S core particle (CP) and two 19S regulatory subunits (RP). The regulatory particle is made of a lid composed of 9 subunits, a base containing 6 ATPases including PSMC2 and few additional components. Interacts with NDC80/HEC; this interaction is detected only during M phase. Interacts and SQSTM1. Interacts with PAAF1. Directly interacts with TRIM5. Monoubiquitinated by RNF181. In terms of processing, phosphorylated. Dephosphorylated by UBLCP1 which impairs PSMC2 ATPase activity and disrupts 26S proteasome assembly.

The protein localises to the cytoplasm. It is found in the nucleus. Its function is as follows. Component of the 26S proteasome, a multiprotein complex involved in the ATP-dependent degradation of ubiquitinated proteins. This complex plays a key role in the maintenance of protein homeostasis by removing misfolded or damaged proteins, which could impair cellular functions, and by removing proteins whose functions are no longer required. Therefore, the proteasome participates in numerous cellular processes, including cell cycle progression, apoptosis, or DNA damage repair. PSMC2 belongs to the heterohexameric ring of AAA (ATPases associated with diverse cellular activities) proteins that unfolds ubiquitinated target proteins that are concurrently translocated into a proteolytic chamber and degraded into peptides. The sequence is that of 26S proteasome regulatory subunit 7 (PSMC2) from Bos taurus (Bovine).